The following is a 310-amino-acid chain: Aspartate carbamoyltransferase catalytic subunit (310 aa).

The carbamoyl phosphate site is built by arginine 58 and threonine 59. Residue lysine 86 participates in L-aspartate binding. Carbamoyl phosphate contacts are provided by arginine 108, histidine 136, and glutamine 139. Arginine 169 and arginine 224 together coordinate L-aspartate. Residues glycine 265 and proline 266 each contribute to the carbamoyl phosphate site.

The protein belongs to the aspartate/ornithine carbamoyltransferase superfamily. ATCase family. Heterododecamer (2C3:3R2) of six catalytic PyrB chains organized as two trimers (C3), and six regulatory PyrI chains organized as three dimers (R2).

It carries out the reaction carbamoyl phosphate + L-aspartate = N-carbamoyl-L-aspartate + phosphate + H(+). The protein operates within pyrimidine metabolism; UMP biosynthesis via de novo pathway; (S)-dihydroorotate from bicarbonate: step 2/3. Functionally, catalyzes the condensation of carbamoyl phosphate and aspartate to form carbamoyl aspartate and inorganic phosphate, the committed step in the de novo pyrimidine nucleotide biosynthesis pathway. In Citrifermentans bemidjiense (strain ATCC BAA-1014 / DSM 16622 / JCM 12645 / Bem) (Geobacter bemidjiensis), this protein is Aspartate carbamoyltransferase catalytic subunit.